A 137-amino-acid polypeptide reads, in one-letter code: UPF0768 protein C1952.04c (137 aa).

Residues 79–93 are compositionally biased toward basic and acidic residues; sequence QRRRREDLPTPERPE. The interval 79–137 is disordered; it reads QRRRREDLPTPERPEASAQQHAFFPGSSSQQTDIPNVRPQPHIPPPRKSDEAPPPYSYK. The span at 119–137 shows a compositional bias: pro residues; sequence PHIPPPRKSDEAPPPYSYK.

This sequence belongs to the UPF0768 family.

The chain is UPF0768 protein C1952.04c from Schizosaccharomyces pombe (strain 972 / ATCC 24843) (Fission yeast).